The chain runs to 215 residues: Adenylate kinase (215 aa).

10–15 (GAGKGT) contacts ATP. Residues 30-59 (STGDILRANVREGTELGLAAKEYMDKGELV) are NMP. AMP contacts are provided by residues threonine 31, arginine 36, 57-59 (ELV), 85-88 (GYPR), and glutamine 92. Positions 126–162 (GRLMCNCGASYHRTFNPPKKDDVCDICGGKVFQRADD) are LID. Arginine 127 contacts ATP. Zn(2+) is bound by residues cysteine 130 and cysteine 132. 135–136 (SY) is an ATP binding site. The Zn(2+) site is built by cysteine 149 and cysteine 152. AMP is bound by residues arginine 159 and arginine 170. Lysine 198 contacts ATP.

Belongs to the adenylate kinase family. As to quaternary structure, monomer.

The protein resides in the cytoplasm. The catalysed reaction is AMP + ATP = 2 ADP. The protein operates within purine metabolism; AMP biosynthesis via salvage pathway; AMP from ADP: step 1/1. Catalyzes the reversible transfer of the terminal phosphate group between ATP and AMP. Plays an important role in cellular energy homeostasis and in adenine nucleotide metabolism. This chain is Adenylate kinase, found in Methanosarcina barkeri (strain Fusaro / DSM 804).